The sequence spans 183 residues: CKLF-like MARVEL transmembrane domain-containing protein 6 (183 aa).

Methionine 1 carries the post-translational modification N-acetylmethionine. Residues 1–39 (MENGAVYSPTTEEDPGPARGPRSGLAAYFFMGRLPLLRR) lie on the Cytoplasmic side of the membrane. At serine 8 the chain carries Phosphoserine. Residues 33–160 (RLPLLRRVLK…DFITMLYEKR (128 aa)) enclose the MARVEL domain. The helical transmembrane segment at 40–60 (VLKGLQLLLSLLAFICEEVVS) threads the bilayer. At 61–67 (QCTLCGG) the chain is on the extracellular side. The chain crosses the membrane as a helical span at residues 68–88 (LYFFEFVSCSAFLLSLLILIV). Residues 89-106 (YCTPFYERVDTTKVKSSD) lie on the Cytoplasmic side of the membrane. The helical transmembrane segment at 107–127 (FYITLGTGCVFLLASIIFVST) threads the bilayer. Residues 128 to 134 (HDRTSAE) lie on the Extracellular side of the membrane. Residues 135–155 (IAAIVFGFIASFMFLLDFITM) traverse the membrane as a helical segment. Residues 156–183 (LYEKRQESQLRKPENTTRAEALTEPLNA) lie on the Cytoplasmic side of the membrane. Threonine 171 bears the Phosphothreonine mark.

This sequence belongs to the chemokine-like factor family. Interacts with PD-L1/CD274 (via transmembrane domain); the interaction is direct. Interacts with CMTM4. Interacts with CD58, ARG1, ENO1 and TMPO. Expressed in the leukocytes, placenta and testis.

It is found in the cell membrane. It localises to the early endosome membrane. Its subcellular location is the recycling endosome membrane. Master regulator of recycling and plasma membrane expression of PD-L1/CD274, an immune inhibitory ligand critical for immune tolerance to self and antitumor immunity. Associates with both constitutive and IFNG-induced PD-L1/CD274 at recycling endosomes, where it protects PD-L1/CD274 from being targeted for lysosomal degradation, likely by preventing its STUB1-mediated ubiquitination. May stabilize PD-L1/CD274 expression on antigen presenting cells and potentiates inhibitory signaling by PDCD1/CD279, its receptor on T-cells, ultimately triggering T-cell anergy. This chain is CKLF-like MARVEL transmembrane domain-containing protein 6, found in Homo sapiens (Human).